The primary structure comprises 118 residues: Elongin-B (118 aa).

Met1 bears the N-acetylmethionine mark. One can recognise a Ubiquitin-like domain in the interval Met1–Phe79. The residue at position 84 (Thr84) is a Phosphothreonine. The disordered stretch occupies residues Glu91 to Gln118. A phosphoserine mark is found at Ser108 and Ser111. The segment covering Ser108–Gln118 has biased composition (polar residues).

This sequence belongs to the Elongin B family. In terms of assembly, heterotrimer of an A (ELOA, ELOA2 or ELOA3P), ELOB and ELOC subunit. The elongin BC complex interacts with EPOP; leading to recruit the elongin BC complex to Polycomb group (PcG) target genes, thereby restricting excessive activity of the PRC2/EED-EZH2 complex. Component of multiple cullin-RING E3 ubiquitin-protein ligase complexes composed of Elongin BC (ELOB and ELOC), a cullin (either CUL2 or CUL5), a catalytic subunit (either RBX1 or RNF7/RBX2), as well as a substrate adapter protein that can be either ASB2, ASB9, ASB11, KLHDC2, KLHDC3, KLHDC10, APPBP2, FEM1A, FEM1B, FEM1C, LRR1, PCMTD1, SOCS1, SOCS2, SOCS5, SPSB1, SPSB3, ELOA, VHL, WSB1 or RAB40C. As part of the Elongin BC E3 ubiquitin ligase complex; interacts with NRBP1. May also interact with DCUN1D1, DCUN1D2, DCUN1D3 and DCUN1D5. May form oligomers as a KLHDC2/KLHDC3-ELOB-ELOC complex; this interaction is autoinhibitory for the E3 ligase complex as the substrate-binding site of KLHDC2/KLHDC3 is blocked in the oligomer.

Its subcellular location is the nucleus. It functions in the pathway protein modification; protein ubiquitination. Its function is as follows. SIII, also known as elongin, is a general transcription elongation factor that increases the RNA polymerase II transcription elongation past template-encoded arresting sites. Subunit A is transcriptionally active and its transcription activity is strongly enhanced by binding to the dimeric complex of the SIII regulatory subunits B and C (elongin BC complex). In embryonic stem cells, the elongin BC complex is recruited by EPOP to Polycomb group (PcG) target genes in order generate genomic region that display both active and repressive chromatin properties, an important feature of pluripotent stem cells. In terms of biological role, core component of multiple cullin-2 and cullin-5-RING E3 ubiquitin-protein ligase complexes (ECS complexes), which mediate the ubiquitination of target proteins. By binding to BC-box motifs it seems to link target recruitment subunits, like VHL and members of the SOCS box family, to Cullin/RBX1 modules that activate E2 ubiquitination enzymes. Component the von Hippel-Lindau ubiquitination complex CBC(VHL). A number of ECS complexes (containing either KLHDC2, KLHDC3, KLHDC10, APPBP2, FEM1A, FEM1B or FEM1C as substrate-recognition component) are part of the DesCEND (destruction via C-end degrons) pathway, which recognizes a C-degron located at the extreme C terminus of target proteins, leading to their ubiquitination and degradation. The ECS(ASB9) complex mediates ubiquitination and degradation of CKB. As part of a multisubunit ubiquitin ligase complex, polyubiquitinates monoubiquitinated POLR2A. ECS(LRR1) ubiquitinates MCM7 and promotes CMG replisome disassembly by VCP and chromatin extraction during S-phase. As part of the ECS(RAB40C) complex, mediates ANKRD28 ubiquitination and degradation, thereby inhibiting protein phosphatase 6 (PP6) complex activity and focal adhesion assembly during cell migration. This chain is Elongin-B, found in Mus musculus (Mouse).